A 139-amino-acid polypeptide reads, in one-letter code: MRIMGLDVGSKTVGVAISDPLGFTAQGLEIIKIDEEKAEFGFTRLEELVKQYQVEQFVIGLPKNMNNTNGPRVDASITYGNHIEHLFGLPVHYQDERLTTVEAKRMLIEQADISRGKRKKVIDKLAAQLILQNYLNRNF.

The protein belongs to the YqgF nuclease family.

It is found in the cytoplasm. Its function is as follows. Could be a nuclease involved in processing of the 5'-end of pre-16S rRNA. This chain is Putative pre-16S rRNA nuclease, found in Streptococcus pyogenes serotype M1.